The following is an 88-amino-acid chain: Large ribosomal subunit protein bL27 (88 aa).

It belongs to the bacterial ribosomal protein bL27 family.

The chain is Large ribosomal subunit protein bL27 from Mycolicibacterium smegmatis (strain ATCC 700084 / mc(2)155) (Mycobacterium smegmatis).